A 162-amino-acid chain; its full sequence is Large ribosomal subunit protein uL15 (162 aa).

Residues Met-1–Val-44 are disordered. Over residues Arg-21 to Val-35 the composition is skewed to gly residues.

It belongs to the universal ribosomal protein uL15 family. Part of the 50S ribosomal subunit.

Its function is as follows. Binds to the 23S rRNA. The chain is Large ribosomal subunit protein uL15 from Rhodospirillum rubrum (strain ATCC 11170 / ATH 1.1.1 / DSM 467 / LMG 4362 / NCIMB 8255 / S1).